The primary structure comprises 622 residues: Probable methionine--tRNA ligase, mitochondrial (622 aa).

The 'HIGH' region signature appears at 67–79 (PIFYVNASPHVGH). Positions 366–370 (KMSKS) match the 'KMSKS' region motif. Position 369 (K369) interacts with ATP. The segment at 592–622 (LDDIKGMGPDAGSKKHSSGNKPSSGNKKPTA) is disordered. A compositionally biased stretch (low complexity) spans 610 to 622 (GNKPSSGNKKPTA).

Belongs to the class-I aminoacyl-tRNA synthetase family.

The protein resides in the mitochondrion matrix. It carries out the reaction tRNA(Met) + L-methionine + ATP = L-methionyl-tRNA(Met) + AMP + diphosphate. This is Probable methionine--tRNA ligase, mitochondrial from Neurospora crassa (strain ATCC 24698 / 74-OR23-1A / CBS 708.71 / DSM 1257 / FGSC 987).